We begin with the raw amino-acid sequence, 502 residues long: Glycerol kinase (502 aa).

Position 14 (Thr-14) interacts with ADP. The ATP site is built by Thr-14, Thr-15, and Ser-16. Thr-14 provides a ligand contact to sn-glycerol 3-phosphate. Arg-18 serves as a coordination point for ADP. Sn-glycerol 3-phosphate-binding residues include Arg-84, Glu-85, Tyr-136, and Asp-246. Arg-84, Glu-85, Tyr-136, Asp-246, and Gln-247 together coordinate glycerol. ADP-binding residues include Thr-268 and Gly-311. Thr-268, Gly-311, Gln-315, and Gly-412 together coordinate ATP. Gly-412 and Asn-416 together coordinate ADP.

It belongs to the FGGY kinase family. As to quaternary structure, homotetramer and homodimer (in equilibrium). Heterodimer with EIIA-Glc. Binds 1 zinc ion per glycerol kinase EIIA-Glc dimer. The zinc ion is important for dimerization.

It carries out the reaction glycerol + ATP = sn-glycerol 3-phosphate + ADP + H(+). The protein operates within polyol metabolism; glycerol degradation via glycerol kinase pathway; sn-glycerol 3-phosphate from glycerol: step 1/1. Activity of this regulatory enzyme is affected by several metabolites. Allosterically and non-competitively inhibited by fructose 1,6-bisphosphate (FBP) and unphosphorylated phosphocarrier protein EIIA-Glc (III-Glc), an integral component of the bacterial phosphotransferase (PTS) system. Its function is as follows. Key enzyme in the regulation of glycerol uptake and metabolism. Catalyzes the phosphorylation of glycerol to yield sn-glycerol 3-phosphate. This Escherichia fergusonii (strain ATCC 35469 / DSM 13698 / CCUG 18766 / IAM 14443 / JCM 21226 / LMG 7866 / NBRC 102419 / NCTC 12128 / CDC 0568-73) protein is Glycerol kinase.